A 414-amino-acid chain; its full sequence is Arrestin domain-containing protein 3 (414 aa).

2 consecutive short sequence motifs (PPxY motif) follow at residues 346-349 (PPSY) and 391-394 (PPLY). Positions 393 to 414 (LYSEIDPNPDQPADDRPSCPSR) are disordered. Residues 405–414 (ADDRPSCPSR) are compositionally biased toward basic and acidic residues.

The protein belongs to the arrestin family. Interacts (via PPxY motifs) with NEDD4 (via WW domains). Interacts with ADRB2. Interacts with ADRB3. Interacts with HGS (via PPxY motifs). Does not bind TXN (thioredoxin). Interacts with ITCH.

Its subcellular location is the cytoplasm. It is found in the cell membrane. The protein localises to the lysosome. The protein resides in the endosome. It localises to the early endosome. Adapter protein that plays a role in regulating cell-surface expression of adrenergic receptors and probably also other G protein-coupled receptors. Plays a role in NEDD4-mediated ubiquitination and endocytosis af activated ADRB2 and subsequent ADRB2 degradation. May recruit NEDD4 to ADRB2. Alternatively, may function as adapter protein that does not play a major role in recruiting NEDD4 to ADRB2, but rather plays a role in a targeting ADRB2 to endosomes. This chain is Arrestin domain-containing protein 3 (ARRDC3), found in Bos taurus (Bovine).